The chain runs to 139 residues: Transcriptional regulator WhiB5 (139 aa).

Positions 4-77 (PCATDPELWF…AGIKLPGGQY (74 aa)) constitute a 4Fe-4S Wbl-type domain. 4 residues coordinate [4Fe-4S] cluster: C5, C41, C45, and C53.

It belongs to the WhiB family. It depends on [4Fe-4S] cluster as a cofactor. Post-translationally, the Fe-S cluster can be nitrosylated by nitric oxide (NO). In terms of processing, upon Fe-S cluster removal intramolecular disulfide bonds are formed.

The protein localises to the cytoplasm. In terms of biological role, a transcription factor that is probably redox-responsive. Probably plays a role in immunomodulation and reactivation after chronic infection. Its induction results in transcription of a number of genes including sigM, and the genes for 2 type VII secretion systems ESX-2 and ESX-4. Seems to negatively regulate its own expression. The apo-form has been shown to act as a protein disulfide reductase. The apo- but not holo-form probably binds DNA. The protein is Transcriptional regulator WhiB5 (whiB5) of Mycobacterium tuberculosis (strain ATCC 25618 / H37Rv).